Consider the following 470-residue polypeptide: Chitin deacetylase 1 (470 aa).

The N-terminal stretch at 1-19 is a signal peptide; the sequence is MFTFAAFSALLISLAGVVA. Residues asparagine 101 and asparagine 121 are each glycosylated (N-linked (GlcNAc...) asparagine). A disulfide bridge links cysteine 155 with cysteine 363. The 200-residue stretch at 159–358 folds into the NodB homology domain; the sequence is NVWGLSYDDG…VLANGTYQLK (200 aa). Catalysis depends on aspartate 166, which acts as the Proton acceptor. Aspartate 166 is an acetate binding site. Residues aspartate 167, histidine 216, and histidine 220 each coordinate Co(2+). Tyrosine 257 is a binding site for acetate. Histidine 331 functions as the Proton donor in the catalytic mechanism. N-linked (GlcNAc...) asparagine glycans are attached at residues asparagine 352, asparagine 378, and asparagine 440. The segment at 406–447 is disordered; sequence EVSAPSEATGSTAAGSAASTTSGSGASASTGAASNTSSSGSG. A compositionally biased stretch (low complexity) spans 408–447; that stretch reads SAPSEATGSTAAGSAASTTSGSGASASTGAASNTSSSGSG. Residue serine 444 is the site of GPI-anchor amidated serine attachment. The propeptide at 445–470 is removed in mature form; sequence GSGRSATMGGALIALAAVAVGMVYVA.

The protein belongs to the polysaccharide deacetylase family. It depends on Co(2+) as a cofactor.

It localises to the secreted. It is found in the cell wall. The protein localises to the cell membrane. It carries out the reaction [(1-&gt;4)-N-acetyl-beta-D-glucosaminyl](n) + n H2O = chitosan + n acetate. Hydrolyzes the N-acetamido groups of N-acetyl-D-glucosamine residues in chitin to form chitosan and acetate. Chitosan is required to anchor melanin to the cell wall, for maintenance of cell wall integrity, and for proper cytokinesis. Plays a major role in synthesizing cell wall chitosan during host infection; chitosan offers an advantage during infection as it is less readily detected than chitin by host immunosurveillance mechanisms. This chain is Chitin deacetylase 1, found in Cryptococcus neoformans var. grubii serotype A (strain H99 / ATCC 208821 / CBS 10515 / FGSC 9487) (Filobasidiella neoformans var. grubii).